Consider the following 182-residue polypeptide: N-alpha-acetyltransferase daf-31 (182 aa).

Residues methionine 1–alanine 152 enclose the N-acetyltransferase domain. Positions proline 162 to serine 182 are disordered.

This sequence belongs to the acetyltransferase family. ARD1 subfamily. As to quaternary structure, component of the N-terminal acetyltransferase A (NatA) complex. In terms of tissue distribution, expressed in head and tail hypodermal cells, hypodermal seam cells, pharynx, intestine and head and tail neurons.

The catalysed reaction is N-terminal glycyl-[protein] + acetyl-CoA = N-terminal N(alpha)-acetylglycyl-[protein] + CoA + H(+). The enzyme catalyses N-terminal L-alanyl-[protein] + acetyl-CoA = N-terminal N(alpha)-acetyl-L-alanyl-[protein] + CoA + H(+). It carries out the reaction N-terminal L-seryl-[protein] + acetyl-CoA = N-terminal N(alpha)-acetyl-L-seryl-[protein] + CoA + H(+). It catalyses the reaction N-terminal L-valyl-[protein] + acetyl-CoA = N-terminal N(alpha)-acetyl-L-valyl-[protein] + CoA + H(+). The catalysed reaction is N-terminal L-cysteinyl-[protein] + acetyl-CoA = N-terminal N(alpha)-acetyl-L-cysteinyl-[protein] + CoA + H(+). The enzyme catalyses N-terminal L-threonyl-[protein] + acetyl-CoA = N-terminal N(alpha)-acetyl-L-threonyl-[protein] + CoA + H(+). In terms of biological role, catalytic subunit of the N-terminal acetyltransferase A (NatA) complex which displays alpha (N-terminal) acetyltransferase activity. Plays a role in regulating larval development, metabolism and longevity. Functions downstream or alongside daf-3, daf-12 and daf-16 in the dauer formation pathway. Functions upstream of daf-15 to enable animal development. The protein is N-alpha-acetyltransferase daf-31 of Caenorhabditis elegans.